The sequence spans 317 residues: Adenine deaminase (317 aa).

His-14, His-16, and His-194 together coordinate Zn(2+). Glu-197 (proton donor) is an active-site residue. A Zn(2+)-binding site is contributed by Asp-275. Residue Asp-276 coordinates substrate.

Belongs to the metallo-dependent hydrolases superfamily. Adenosine and AMP deaminases family. Adenine deaminase type 2 subfamily. It depends on Zn(2+) as a cofactor.

The enzyme catalyses adenine + H2O + H(+) = hypoxanthine + NH4(+). In terms of biological role, catalyzes the hydrolytic deamination of adenine to hypoxanthine. Plays an important role in the purine salvage pathway and in nitrogen catabolism. This chain is Adenine deaminase, found in Pseudomonas syringae pv. tomato (strain ATCC BAA-871 / DC3000).